We begin with the raw amino-acid sequence, 96 residues long: Integration host factor subunit alpha (96 aa).

The protein belongs to the bacterial histone-like protein family. As to quaternary structure, heterodimer of an alpha and a beta chain.

Functionally, this protein is one of the two subunits of integration host factor, a specific DNA-binding protein that functions in genetic recombination as well as in transcriptional and translational control. The sequence is that of Integration host factor subunit alpha from Haemophilus influenzae (strain 86-028NP).